A 124-amino-acid polypeptide reads, in one-letter code: Ribonuclease pancreatic (124 aa).

Residues 1 to 23 (RESPAMKFQRQHMDSGNSPGNNP) are disordered. Positions 7 and 10 each coordinate substrate. Residue His12 is the Proton acceptor of the active site. The segment covering 14 to 23 (DSGNSPGNNP) has biased composition (polar residues). 4 cysteine pairs are disulfide-bonded: Cys26/Cys84, Cys40/Cys95, Cys58/Cys110, and Cys65/Cys72. Residues 41-45 (KPVNT) and Lys66 each bind substrate. Asn76 carries N-linked (GlcNAc...) asparagine; partial glycosylation. Arg85 lines the substrate pocket. The active-site Proton donor is the His119.

This sequence belongs to the pancreatic ribonuclease family. In terms of assembly, monomer. Interacts with and forms tight 1:1 complexes with RNH1. Dimerization of two such complexes may occur. Interaction with RNH1 inhibits this protein. Pancreas.

The protein localises to the secreted. The catalysed reaction is an [RNA] containing cytidine + H2O = an [RNA]-3'-cytidine-3'-phosphate + a 5'-hydroxy-ribonucleotide-3'-[RNA].. It catalyses the reaction an [RNA] containing uridine + H2O = an [RNA]-3'-uridine-3'-phosphate + a 5'-hydroxy-ribonucleotide-3'-[RNA].. Its function is as follows. Endonuclease that catalyzes the cleavage of RNA on the 3' side of pyrimidine nucleotides. Acts on single-stranded and double-stranded RNA. The polypeptide is Ribonuclease pancreatic (RNASE1) (Balaenoptera acutorostrata (Common minke whale)).